The primary structure comprises 284 residues: 2-dehydro-3-deoxyphosphooctonate aldolase (284 aa).

Belongs to the KdsA family.

Its subcellular location is the cytoplasm. The enzyme catalyses D-arabinose 5-phosphate + phosphoenolpyruvate + H2O = 3-deoxy-alpha-D-manno-2-octulosonate-8-phosphate + phosphate. It functions in the pathway carbohydrate biosynthesis; 3-deoxy-D-manno-octulosonate biosynthesis; 3-deoxy-D-manno-octulosonate from D-ribulose 5-phosphate: step 2/3. Its pathway is bacterial outer membrane biogenesis; lipopolysaccharide biosynthesis. This Photorhabdus laumondii subsp. laumondii (strain DSM 15139 / CIP 105565 / TT01) (Photorhabdus luminescens subsp. laumondii) protein is 2-dehydro-3-deoxyphosphooctonate aldolase.